The chain runs to 263 residues: Neuferricin (263 aa).

An N-terminal signal peptide occupies residues 1–22; the sequence is MLRICGLGVVLSLAVAAVAVMA. The Cytochrome b5 heme-binding domain maps to 35-134; the sequence is IRLFLPEELA…KNYVFVGRLV (100 aa). Residues 220-249 form a disordered region; that stretch reads VRTTGPPSDQQDNPRHSNHGDLDNPNLEEY. The span at 231–241 shows a compositional bias: basic and acidic residues; that stretch reads DNPRHSNHGDL.

Belongs to the cytochrome b5 family. MAPR subfamily. Expressed in various tissues including brain, heart, adrenal gland, and kidney. In the brain, mainly expressed in pyramidal cells around the CA3 region of Ammon horn in hippocampus. Present in brain (at protein level).

It is found in the secreted. In terms of biological role, heme-binding protein which promotes neuronal but not astrocyte differentiation. This chain is Neuferricin, found in Mus musculus (Mouse).